Here is a 409-residue protein sequence, read N- to C-terminus: Chaetoglobosin A biosynthesis cluster protein C (409 aa).

The region spanning D51–R120 is the HTH CENPB-type domain. A DNA-binding region (H-T-H motif) is located at residues R84 to R113. Disordered stretches follow at residues P243–S269 and A320–L350. Polar residues predominate over residues P255–S269.

The protein localises to the nucleus. Its function is as follows. Part of the gene cluster that mediates the biosynthesis of chaetoglobosin A which has a unique inhibitory activity against actin polymerization in mammalian cells. Chaetoglobosin A and its intermediates are involved in the morphological differentiation of C.globosum. The first step of the pathway is the synthesis of prochaetoglobosin I via condensation of one acetyl-CoA, 8 malonyl-CoA, and a L-tryptophan molecule by the PKS-NRPS hybrid synthetase cheA, followed by reduction of backbone double bond to install desired geometry by the enoyl reductase cheB. Further multiple oxidation steps performed by the cytochrome P450 monooxygenases cheE and cheG, as well as by the FAD-linked oxidoreductase cheF, lead to the formation of chaetoglobosin A. Depending on the order of action of these reductases, distinct intermediates can be identified. Within the pathway, the cytochrome P450 monooxygenase cheE catalyzes a stereospecific epoxidation on prochaetoglobosin I, cytoglobosin D, and chaetoglobosin J intermediates. The FAD-linked oxidoreductase cheF performs dehydrogenation of the C-20 hydroxyl groups in the 20-dihyrochaetoglobosin A and cytoglobosin D intermediates. Finally, the cytochrome P450 monooxygenase cheG can catalyze the stereospecific dihydroxylation of prochaetoglobosin I and prochaetoglobosin IV at C-19 and C-20, respectively. The Diels-Alderase cheD may play a role in the post-PKS-NRPS biosynthetic steps catalyzing Diels-Alder cyclization. The chain is Chaetoglobosin A biosynthesis cluster protein C from Chaetomium globosum (strain ATCC 6205 / CBS 148.51 / DSM 1962 / NBRC 6347 / NRRL 1970) (Soil fungus).